An 812-amino-acid polypeptide reads, in one-letter code: Leucine--tRNA ligase (812 aa).

Residues 40 to 51 carry the 'HIGH' region motif; the sequence is SYPSGSNLHAGH. Residues 572 to 576 carry the 'KMSKS' region motif; it reads KMSKS. Lysine 575 lines the ATP pocket.

This sequence belongs to the class-I aminoacyl-tRNA synthetase family.

It is found in the cytoplasm. The enzyme catalyses tRNA(Leu) + L-leucine + ATP = L-leucyl-tRNA(Leu) + AMP + diphosphate. The sequence is that of Leucine--tRNA ligase from Clostridium tetani (strain Massachusetts / E88).